Reading from the N-terminus, the 481-residue chain is Hyaluronidase-4 (481 aa).

Residues 1–11 (MQLLPEGQLRL) are Cytoplasmic-facing. The chain crosses the membrane as a helical span at residues 12-32 (CVFQPVHLTSGLLILFILKSI). Residues 33-455 (SSLKPARLPV…CREMTEASGP (423 aa)) are Extracellular-facing. 5 disulfides stabilise this stretch: cysteine 59–cysteine 351, cysteine 223–cysteine 237, cysteine 376–cysteine 387, cysteine 381–cysteine 435, and cysteine 437–cysteine 446. Residues asparagine 64 and asparagine 115 are each glycosylated (N-linked (GlcNAc...) asparagine). Glutamate 147 serves as the catalytic Proton donor. N-linked (GlcNAc...) asparagine glycans are attached at residues asparagine 232 and asparagine 343. A helical transmembrane segment spans residues 456–476 (SGLSLSSSSVITLCLLVLAGY). Residues 477–481 (QSIQL) are Cytoplasmic-facing.

This sequence belongs to the glycosyl hydrolase 56 family.

It is found in the membrane. It catalyses the reaction Random hydrolysis of (1-&gt;4)-linkages between N-acetyl-beta-D-glucosamine and D-glucuronate residues in hyaluronate.. Endo-hyaluronidase that degrades hyaluronan to smaller oligosaccharide fragments. Also has chondroitin sulfate hydrolase activity, The best substrate being the galactosaminidic linkage in the sequence of a trisulfated tetrasaccharide. The sequence is that of Hyaluronidase-4 (Hyal4) from Mus musculus (Mouse).